The chain runs to 235 residues: Orotidine 5'-phosphate decarboxylase (235 aa).

Substrate is bound by residues Asp12, Lys34, 61 to 70 (DMKLLDIDNT), Thr116, Arg177, Gln186, and Arg207. Catalysis depends on Lys63, which acts as the Proton donor.

This sequence belongs to the OMP decarboxylase family. Type 1 subfamily. As to quaternary structure, homodimer.

It catalyses the reaction orotidine 5'-phosphate + H(+) = UMP + CO2. It functions in the pathway pyrimidine metabolism; UMP biosynthesis via de novo pathway; UMP from orotate: step 2/2. Functionally, catalyzes the decarboxylation of orotidine 5'-monophosphate (OMP) to uridine 5'-monophosphate (UMP). This chain is Orotidine 5'-phosphate decarboxylase, found in Agrobacterium fabrum (strain C58 / ATCC 33970) (Agrobacterium tumefaciens (strain C58)).